Here is a 409-residue protein sequence, read N- to C-terminus: Astacin-like metalloendopeptidase (409 aa).

An N-terminal signal peptide occupies residues 1 to 19 (MDLKMLLIFTAFLLPAVLG). The propeptide occupies 20 to 86 (FPIQDNYENS…EGDIVPRRSR (67 aa)). Over residues 30–42 (TATSESTQVTTEE) the composition is skewed to low complexity. The interval 30–55 (TATSESTQVTTEESIYDSPSPTETDS) is disordered. Residues 87-285 (SAFNCRNCYW…AKINKLYNCS (199 aa)) form the Peptidase M12A domain. 5 cysteine pairs are disulfide-bonded: cysteine 91–cysteine 94, cysteine 134–cysteine 284, cysteine 155–cysteine 175, cysteine 287–cysteine 313, and cysteine 339–cysteine 362. Histidine 183 provides a ligand contact to Zn(2+). Residue glutamate 184 is part of the active site. Residues histidine 187 and histidine 193 each contribute to the Zn(2+) site. Positions 287-399 (CSTIIDAAFG…SGFQATFTSA (113 aa)) constitute a CUB domain.

It depends on Zn(2+) as a cofactor.

The protein localises to the cytoplasm. The protein resides in the cell membrane. It is found in the cytoplasmic vesicle. Its subcellular location is the secretory vesicle. It localises to the cortical granule. Its function is as follows. Probable oocyte-specific oolemmal receptor involved in sperm and egg adhesion and fertilization. Protease which may play a role in the breaking down of the vitelline membrane (days 0-5) and possibly, in the digestion of the egg white (days 9-12). This is Astacin-like metalloendopeptidase from Coturnix japonica (Japanese quail).